We begin with the raw amino-acid sequence, 249 residues long: Phosphoribosylaminoimidazole-succinocarboxamide synthase (249 aa).

This sequence belongs to the SAICAR synthetase family.

It catalyses the reaction 5-amino-1-(5-phospho-D-ribosyl)imidazole-4-carboxylate + L-aspartate + ATP = (2S)-2-[5-amino-1-(5-phospho-beta-D-ribosyl)imidazole-4-carboxamido]succinate + ADP + phosphate + 2 H(+). The protein operates within purine metabolism; IMP biosynthesis via de novo pathway; 5-amino-1-(5-phospho-D-ribosyl)imidazole-4-carboxamide from 5-amino-1-(5-phospho-D-ribosyl)imidazole-4-carboxylate: step 1/2. The chain is Phosphoribosylaminoimidazole-succinocarboxamide synthase from Roseiflexus castenholzii (strain DSM 13941 / HLO8).